A 207-amino-acid chain; its full sequence is Galactoside O-acetyltransferase (207 aa).

Residue asparagine 87 coordinates acetyl-CoA. The active-site Proton donor/acceptor is histidine 117. Acetyl-CoA is bound by residues alanine 144, alanine 162, 167–168 (TK), and arginine 185.

This sequence belongs to the transferase hexapeptide repeat family. As to quaternary structure, homotrimer.

The protein localises to the cytoplasm. The catalysed reaction is a beta-D-galactoside + acetyl-CoA = a 6-acetyl-beta-D-galactoside + CoA. The chain is Galactoside O-acetyltransferase (lacA) from Lactococcus lactis subsp. lactis (strain IL1403) (Streptococcus lactis).